Consider the following 642-residue polypeptide: Putative ATP-binding protein YdiF (642 aa).

2 ABC transporter domains span residues 4–259 (LQVN…EKDL) and 327–541 (LRVQ…ELEK). Residues 36-43 (GRNGAGKS) and 360-367 (GPNGIGKS) contribute to the ATP site. Composition is skewed to basic and acidic residues over residues 541 to 550 (KMNQQEETDK) and 557 to 567 (SDSKRSYEEEK). Residues 541–567 (KMNQQEETDKTPATVKSDSKRSYEEEK) form a disordered region.

The protein belongs to the ABC transporter superfamily. ABCF family. YdiF subfamily.

The protein is Putative ATP-binding protein YdiF (ydiF) of Bacillus subtilis (strain 168).